The chain runs to 374 residues: Dispase autolysis-inducing protein (374 aa).

Residues 1-26 (MKRMGWAVTAAVTTIVLAQSSLAAQA) form the signal peptide.

The protein resides in the secreted. In terms of biological role, induces autolysis of dispase and thermolysin. This is Dispase autolysis-inducing protein (daip) from Streptomyces mobaraensis (Streptoverticillium mobaraense).